Reading from the N-terminus, the 257-residue chain is Deoxyribose-phosphate aldolase (257 aa).

Asp102 serves as the catalytic Proton donor/acceptor. Lys166 (schiff-base intermediate with acetaldehyde) is an active-site residue. Residue Lys198 is the Proton donor/acceptor of the active site.

The protein belongs to the DeoC/FbaB aldolase family. DeoC type 2 subfamily.

The protein localises to the cytoplasm. It carries out the reaction 2-deoxy-D-ribose 5-phosphate = D-glyceraldehyde 3-phosphate + acetaldehyde. It participates in carbohydrate degradation; 2-deoxy-D-ribose 1-phosphate degradation; D-glyceraldehyde 3-phosphate and acetaldehyde from 2-deoxy-alpha-D-ribose 1-phosphate: step 2/2. Its function is as follows. Catalyzes a reversible aldol reaction between acetaldehyde and D-glyceraldehyde 3-phosphate to generate 2-deoxy-D-ribose 5-phosphate. This chain is Deoxyribose-phosphate aldolase, found in Shewanella loihica (strain ATCC BAA-1088 / PV-4).